The following is a 258-amino-acid chain: Putative cysteine-rich repeat secretory protein 16 (258 aa).

The N-terminal stretch at 1–30 is a signal peptide; sequence MYYSSPTCFVLITIFAVVVTQLIFMRTVSS. Gnk2-homologous domains lie at 37-139 and 144-247; these read YLNH…PFDT and DKDN…LYPF.

It belongs to the cysteine-rich repeat secretory protein family.

It is found in the secreted. In Arabidopsis thaliana (Mouse-ear cress), this protein is Putative cysteine-rich repeat secretory protein 16 (CRRSP16).